The primary structure comprises 86 residues: Protein Tat (86 aa).

Residues 1-24 (MEPVDPRLEPWKHPGSQPKTACTN) form an interaction with human CREBBP region. The segment at 1-48 (MEPVDPRLEPWKHPGSQPKTACTNCYCKKCCFHCQVCFITKALGISYG) is transactivation. The Zn(2+) site is built by Cys22, Cys25, and Cys27. The interval 22–37 (CTNCYCKKCCFHCQVC) is cysteine-rich. Lys28 carries the N6-acetyllysine; by host PCAF modification. Zn(2+)-binding residues include Cys30, His33, Cys34, and Cys37. The interval 38–48 (FITKALGISYG) is core. Positions 48 to 59 (GRKKRRQRRRAH) are enriched in basic residues. The interval 48–86 (GRKKRRQRRRAHQNSQTHQASLSKQPTSQPRGDPTGPKE) is disordered. Positions 49–57 (RKKRRQRRR) match the Nuclear localization signal, RNA-binding (TAR), and protein transduction motif. Residues 49–86 (RKKRRQRRRAHQNSQTHQASLSKQPTSQPRGDPTGPKE) are interaction with the host capping enzyme RNGTT. Residues Lys50 and Lys51 each carry the N6-acetyllysine; by host EP300 and GCN5L2 modification. Asymmetric dimethylarginine; by host PRMT6 occurs at positions 52 and 53. A compositionally biased stretch (polar residues) spans 60-77 (QNSQTHQASLSKQPTSQP). Lys71 participates in a covalent cross-link: Glycyl lysine isopeptide (Lys-Gly) (interchain with G-Cter in ubiquitin). The Cell attachment site motif lies at 78–80 (RGD).

The protein belongs to the lentiviruses Tat family. In terms of assembly, interacts with host CCNT1. Associates with the P-TEFb complex composed at least of Tat, P-TEFb (CDK9 and CCNT1), TAR RNA, RNA Pol II. Recruits the HATs CREBBP, TAF1/TFIID, EP300, PCAF and GCN5L2. Interacts with host KAT5/Tip60; this interaction targets the latter to degradation. Interacts with the host deacetylase SIRT1. Interacts with host capping enzyme RNGTT; this interaction stimulates RNGTT. Binds to host KDR, and to the host integrins ITGAV/ITGB3 and ITGA5/ITGB1. Interacts with host KPNB1/importin beta-1 without previous binding to KPNA1/importin alpha-1. Interacts with EIF2AK2. Interacts with host nucleosome assembly protein NAP1L1; this interaction may be required for the transport of Tat within the nucleus, since the two proteins interact at the nuclear rim. Interacts with host C1QBP/SF2P32; this interaction involves lysine-acetylated Tat. Interacts with the host chemokine receptors CCR2, CCR3 and CXCR4. Interacts with host DPP4/CD26; this interaction may trigger an anti-proliferative effect. Interacts with host LDLR. Interacts with the host extracellular matrix metalloproteinase MMP1. Interacts with host PRMT6; this interaction mediates Tat's methylation. Interacts with, and is ubiquitinated by MDM2/Hdm2. Interacts with host PSMC3 and HTATIP2. Interacts with STAB1; this interaction may overcome SATB1-mediated repression of IL2 and IL2RA (interleukin) in T cells by binding to the same domain than HDAC1. Interacts (when acetylated) with human CDK13, thereby increasing HIV-1 mRNA splicing and promoting the production of the doubly spliced HIV-1 protein Nef. Interacts with host TBP; this interaction modulates the activity of transcriptional pre-initiation complex. Interacts with host RELA. Interacts with host PLSCR1; this interaction negatively regulates Tat transactivation activity by altering its subcellular distribution. In terms of processing, asymmetrical arginine methylation by host PRMT6 seems to diminish the transactivation capacity of Tat and affects the interaction with host CCNT1. Post-translationally, acetylation by EP300, CREBBP, GCN5L2/GCN5 and PCAF regulates the transactivation activity of Tat. EP300-mediated acetylation of Lys-50 promotes dissociation of Tat from the TAR RNA through the competitive binding to PCAF's bromodomain. In addition, the non-acetylated Tat's N-terminus can also interact with PCAF. PCAF-mediated acetylation of Lys-28 enhances Tat's binding to CCNT1. Lys-50 is deacetylated by SIRT1. Polyubiquitination by host MDM2 does not target Tat to degradation, but activates its transactivation function and fosters interaction with CCNT1 and TAR RNA. In terms of processing, phosphorylated by EIF2AK2 on serine and threonine residues adjacent to the basic region important for TAR RNA binding and function. Phosphorylation of Tat by EIF2AK2 is dependent on the prior activation of EIF2AK2 by dsRNA.

The protein resides in the host nucleus. Its subcellular location is the host nucleolus. The protein localises to the host cytoplasm. It is found in the secreted. Transcriptional activator that increases RNA Pol II processivity, thereby increasing the level of full-length viral transcripts. Recognizes a hairpin structure at the 5'-LTR of the nascent viral mRNAs referred to as the transactivation responsive RNA element (TAR) and recruits the cyclin T1-CDK9 complex (P-TEFb complex) that will in turn hyperphosphorylate the RNA polymerase II to allow efficient elongation. The CDK9 component of P-TEFb and other Tat-activated kinases hyperphosphorylate the C-terminus of RNA Pol II that becomes stabilized and much more processive. Other factors such as HTATSF1/Tat-SF1, SUPT5H/SPT5, and HTATIP2 are also important for Tat's function. Besides its effect on RNA Pol II processivity, Tat induces chromatin remodeling of proviral genes by recruiting the histone acetyltransferases (HATs) CREBBP, EP300 and PCAF to the chromatin. This also contributes to the increase in proviral transcription rate, especially when the provirus integrates in transcriptionally silent region of the host genome. To ensure maximal activation of the LTR, Tat mediates nuclear translocation of NF-kappa-B by interacting with host RELA. Through its interaction with host TBP, Tat may also modulate transcription initiation. Tat can reactivate a latently infected cell by penetrating in it and transactivating its LTR promoter. In the cytoplasm, Tat is thought to act as a translational activator of HIV-1 mRNAs. Functionally, extracellular circulating Tat can be endocytosed by surrounding uninfected cells via the binding to several surface receptors such as CD26, CXCR4, heparan sulfate proteoglycans (HSPG) or LDLR. Neurons are rarely infected, but they internalize Tat via their LDLR. Through its interaction with nuclear HATs, Tat is potentially able to control the acetylation-dependent cellular gene expression. Modulates the expression of many cellular genes involved in cell survival, proliferation or in coding for cytokines or cytokine receptors. Tat plays a role in T-cell and neurons apoptosis. Tat induced neurotoxicity and apoptosis probably contribute to neuroAIDS. Circulating Tat also acts as a chemokine-like and/or growth factor-like molecule that binds to specific receptors on the surface of the cells, affecting many cellular pathways. In the vascular system, Tat binds to ITGAV/ITGB3 and ITGA5/ITGB1 integrins dimers at the surface of endothelial cells and competes with bFGF for heparin-binding sites, leading to an excess of soluble bFGF. This chain is Protein Tat, found in Homo sapiens (Human).